The primary structure comprises 196 residues: MLNPVWLKSLVAIVQTGSFQSAARALGLAQPTVSQHLQKLEEQVGVTLVQRSRSGCQPTTRALAFMPHATALLDMHARALEALHGNRERVGASSNIGTYLLQPFVRNYLTTANERGEVDLRIAANPDVADQLLAGQLDAAIMEWWLPHPDFEYRLWRVEPLVLIVSPDHALAEAGCIERDRLVDLPMLGGEPGSGT.

The HTH lysR-type domain occupies 1–59 (MLNPVWLKSLVAIVQTGSFQSAARALGLAQPTVSQHLQKLEEQVGVTLVQRSRSGCQPT). The segment at residues 19–38 (FQSAARALGLAQPTVSQHLQ) is a DNA-binding region (H-T-H motif).

The protein belongs to the LysR transcriptional regulatory family.

This is Putative HTH-type transcriptional regulator protein PtxE (ptxE) from Stutzerimonas stutzeri (Pseudomonas stutzeri).